The chain runs to 511 residues: BAR/IMD domain-containing adapter protein 2-like 1 (511 aa).

The IMD domain maps to Met-1–Pro-249. Positions Met-115–Leu-154 form a coiled coil. 2 positions are modified to phosphothreonine: Thr-248 and Thr-257. A phosphoserine mark is found at Ser-261 and Ser-281. The tract at residues Asn-302–Arg-328 is disordered. The span at Asn-303–Arg-328 shows a compositional bias: polar residues. A phosphoserine mark is found at Ser-331 and Ser-354. The SH3 domain occupies Met-339–Glu-402. Position 412 is a phosphothreonine (Thr-412). A phosphoserine mark is found at Ser-414, Ser-420, and Ser-422. The segment at Arg-451–Arg-511 is disordered. The interval Pro-483–Arg-511 is binds F-actin.

In terms of assembly, interacts with RAC1. Binds to F-actin. Interacts with FASLG. Interacts (via SH3 domain) with E.coli effector protein EspF(U) (via PXXP motifs). Identified in a complex containing at least WASL, BAIAP2L1 and E.coli EspF(U). Interacts with E.coli intimin receptor Tir. Phosphorylated on tyrosine in response to insulin.

It localises to the cytoplasm. The protein resides in the cytoskeleton. May function as adapter protein. Involved in the formation of clusters of actin bundles. Plays a role in the reorganization of the actin cytoskeleton in response to bacterial infection. This chain is BAR/IMD domain-containing adapter protein 2-like 1 (BAIAP2L1), found in Homo sapiens (Human).